Consider the following 72-residue polypeptide: MVIKRNLLSNHVDEIIGEYYAAKGYSVHSIDRQENGQLIVVTERVAEEKENAKVDIAFDFVHRRPHKKKYLA.

In Bacillus subtilis (strain 168), this protein is SPbeta prophage-derived uncharacterized protein YoqN (yoqN).